Reading from the N-terminus, the 433-residue chain is MTAASRANPYSIVSLEEDGLHLVTMSGANGFGNGKVHTRRRCRNRFVKKNGQCNIAFANMDEKSQRYLADMFTTCVDIRWRYMLLIFSLAFLASWLLFGVIFWVIAVAHGDLEPAEGHGRTPCVMQVHGFMAAFLFSIETQTTIGYGLRCVTEECLVAVFMVVAQSIVGCIIDSFMIGAIMAKMARPKKRAQTLLFSHNAVVALRDGKLCLMWRVGNLRKSHIVEAHVRAQLIKPRVTEEGEYIPLDQIDIDVGFDKGLDRIFLVSPITILHEIDEASPLFGISRQDLETDDFEIVVILEGMVEATAMTTQARSSYLANEILWGHRFEPVLFEEKNQYKIDYSHFHKTYEVPSTPRCSAKDLVENKFLLPSANSFCYENELAFLSRDEEDEADGDQDGRSRDGLSPQARHDFDRLQAGGGVLEQRPYRRGSEI.

At 1–77 (MTAASRANPY…LADMFTTCVD (77 aa)) the chain is on the cytoplasmic side. Residues 78-104 (IRWRYMLLIFSLAFLASWLLFGVIFWV) form a helical membrane-spanning segment. Residues 105–129 (IAVAHGDLEPAEGHGRTPCVMQVHG) are Extracellular-facing. The helical; Pore-forming intramembrane region spans 130–146 (FMAAFLFSIETQTTIGY). Positions 143–148 (TIGYGL) match the Selectivity filter motif. Topologically, residues 147–155 (GLRCVTEEC) are extracellular. Residues 156 to 183 (LVAVFMVVAQSIVGCIIDSFMIGAIMAK) form a helical membrane-spanning segment. The Cytoplasmic portion of the chain corresponds to 184-433 (MARPKKRAQT…QRPYRRGSEI (250 aa)). The segment at 387–433 (DEEDEADGDQDGRSRDGLSPQARHDFDRLQAGGGVLEQRPYRRGSEI) is disordered. The segment covering 396–414 (QDGRSRDGLSPQARHDFDR) has biased composition (basic and acidic residues).

This sequence belongs to the inward rectifier-type potassium channel (TC 1.A.2.1) family. KCNJ12 subfamily. As to quaternary structure, can form heteromeric channels with Kir2.1/KCNJ2. Can form heteromeric channels with Kir2.2/KCNJ12. Probably phosphorylated by PKC; decreases single-channel open probability. As to expression, specifically expressed in skeletal muscle.

It localises to the cell membrane. The protein localises to the endoplasmic reticulum. The catalysed reaction is K(+)(in) = K(+)(out). Inward rectifier potassium channels are characterized by a greater tendency to allow potassium to flow into the cell rather than out of it. Their voltage dependence is regulated by the concentration of extracellular potassium; as external potassium is raised, the voltage range of the channel opening shifts to more positive voltages. The inward rectification is mainly due to the blockage of outward current by internal magnesium. This Homo sapiens (Human) protein is Inward rectifier potassium channel 18 (KCNJ18).